Reading from the N-terminus, the 466-residue chain is Glutamate decarboxylase alpha (466 aa).

Substrate contacts are provided by Thr62 and Asn83. Residues 126-127 (SS), Thr212, and His275 contribute to the pyridoxal 5'-phosphate site. Position 276 is an N6-(pyridoxal phosphate)lysine (Lys276).

This sequence belongs to the group II decarboxylase family. As to quaternary structure, homohexamer. It depends on pyridoxal 5'-phosphate as a cofactor.

The catalysed reaction is L-glutamate + H(+) = 4-aminobutanoate + CO2. In terms of biological role, converts glutamate to gamma-aminobutyrate (GABA), consuming one intracellular proton in the reaction. The gad system helps to maintain a near-neutral intracellular pH when cells are exposed to extremely acidic conditions. The ability to survive transit through the acidic conditions of the stomach is essential for successful colonization of the mammalian host by commensal and pathogenic bacteria. The sequence is that of Glutamate decarboxylase alpha (gadA) from Shigella flexneri.